A 500-amino-acid chain; its full sequence is MAKTLPIMFQGTHSDAGKSVIATAFCRMFAQDGWKTAPFKSQNMSLNSYVTPDGNEIGRAQGIQAEAAGVAARAEMNPILIKPSREHESQIVVLGKPYGNMQAFAYRNEFFHQGLAVIRQSLETLMNEYDRIVIEGAGSPAEVNLNDRELVNMRVARLANAPVVLIGDIERGGVFASLVGTLALLEPEDRKRVVGVIINKFRGDAALLKPGLDWFEQYTGVPVLGVVPHLPDLAIDAEDSLALERFAASSDDKGAIDIAVIRCPKIANFTDIDPLLTEPDCRVRLVTHAGELGEPDVIVLPGSKNTIEDLMYMKKRGLASRIVSLVNEGKTTVVGLCGGYQMLGDVIRDPHGVETPFPEVKGLGLLPVATTLERTKTTVRSEGMLTWAGERFSVRGYEIHMGRSTPLPGYVPLIEIGGRGEGAKREDGRVLGTYMHDLFHNDAFRTAFFNVIRREKGLASSAVRPFHSLKEAAFDRLAAHVRQHVAVERIEQMMRQFQQR.

The GATase cobBQ-type domain occupies 255–444 (AIDIAVIRCP…MHDLFHNDAF (190 aa)). Residue Cys337 is the Nucleophile of the active site. Residue His436 is part of the active site.

This sequence belongs to the CobB/CobQ family. CobQ subfamily.

The protein operates within cofactor biosynthesis; adenosylcobalamin biosynthesis. Catalyzes amidations at positions B, D, E, and G on adenosylcobyrinic A,C-diamide. NH(2) groups are provided by glutamine, and one molecule of ATP is hydrogenolyzed for each amidation. This Geobacillus thermodenitrificans (strain NG80-2) protein is Cobyric acid synthase.